The chain runs to 419 residues: Gamma-glutamyl phosphate reductase (419 aa).

The protein belongs to the gamma-glutamyl phosphate reductase family.

It localises to the cytoplasm. The catalysed reaction is L-glutamate 5-semialdehyde + phosphate + NADP(+) = L-glutamyl 5-phosphate + NADPH + H(+). It participates in amino-acid biosynthesis; L-proline biosynthesis; L-glutamate 5-semialdehyde from L-glutamate: step 2/2. In terms of biological role, catalyzes the NADPH-dependent reduction of L-glutamate 5-phosphate into L-glutamate 5-semialdehyde and phosphate. The product spontaneously undergoes cyclization to form 1-pyrroline-5-carboxylate. This chain is Gamma-glutamyl phosphate reductase, found in Syntrophomonas wolfei subsp. wolfei (strain DSM 2245B / Goettingen).